A 187-amino-acid polypeptide reads, in one-letter code: Ribosome-recycling factor (187 aa).

The protein belongs to the RRF family.

It localises to the cytoplasm. Responsible for the release of ribosomes from messenger RNA at the termination of protein biosynthesis. May increase the efficiency of translation by recycling ribosomes from one round of translation to another. The polypeptide is Ribosome-recycling factor (Roseobacter denitrificans (strain ATCC 33942 / OCh 114) (Erythrobacter sp. (strain OCh 114))).